The primary structure comprises 858 residues: Myosin-K heavy chain (858 aa).

One can recognise a Myosin motor domain in the interval 7–820 (SGVDDLVLVS…TIFVMEDLLM (814 aa)). 100–107 (GESGAGKT) lines the ATP pocket. A disordered region spans residues 121–265 (SPNNSSGGGI…GGGYGGSSKT (145 aa)). 2 stretches are compositionally biased toward gly residues: residues 126 to 139 (SGGG…GNGG) and 157 to 182 (RGMG…SRGG). Pro residues predominate over residues 183-228 (GPPPTRGRGGPPPPIPQNRGAPPPVSNGGAPPPVARGPVAPPPTRG). Over residues 233–245 (RGGGPANRGGRGG) the composition is skewed to gly residues. The segment at 712–722 (PHYIRCIKPND) is actin-binding. A tail region spans residues 821–858 (QKIDPIGYKNRVQAYKENEKLAQMKQGKHSMKQKCLIQ).

Belongs to the TRAFAC class myosin-kinesin ATPase superfamily. Myosin family.

It is found in the cytoplasm. In terms of biological role, myosins are actin-based motor molecules with ATPase activity. Involved in phagocytosis and motility, and in the maintenance and dynamics of cell cortex. This is Myosin-K heavy chain (myoK) from Dictyostelium discoideum (Social amoeba).